A 129-amino-acid polypeptide reads, in one-letter code: Lysozyme C (129 aa).

Residues 1–129 form the C-type lysozyme domain; it reads KVYGRCELAA…VHAWIRGCRL (129 aa). Intrachain disulfides connect Cys6–Cys127, Cys30–Cys115, Cys64–Cys80, and Cys76–Cys94. Residues Glu35 and Asp52 contribute to the active site.

The protein belongs to the glycosyl hydrolase 22 family. In terms of assembly, monomer.

The protein localises to the secreted. The enzyme catalyses Hydrolysis of (1-&gt;4)-beta-linkages between N-acetylmuramic acid and N-acetyl-D-glucosamine residues in a peptidoglycan and between N-acetyl-D-glucosamine residues in chitodextrins.. In terms of biological role, lysozymes have primarily a bacteriolytic function; those in tissues and body fluids are associated with the monocyte-macrophage system and enhance the activity of immunoagents. This Lophophorus impejanus (Himalayan monal pheasant) protein is Lysozyme C (LYZ).